A 194-amino-acid chain; its full sequence is NADH-quinone oxidoreductase subunit B (194 aa).

[4Fe-4S] cluster is bound by residues C72, C73, C137, and C167.

This sequence belongs to the complex I 20 kDa subunit family. In terms of assembly, NDH-1 is composed of 14 different subunits. Subunits NuoB, C, D, E, F, and G constitute the peripheral sector of the complex. Requires [4Fe-4S] cluster as cofactor.

It is found in the cell inner membrane. The enzyme catalyses a quinone + NADH + 5 H(+)(in) = a quinol + NAD(+) + 4 H(+)(out). Its function is as follows. NDH-1 shuttles electrons from NADH, via FMN and iron-sulfur (Fe-S) centers, to quinones in the respiratory chain. Couples the redox reaction to proton translocation (for every two electrons transferred, four hydrogen ions are translocated across the cytoplasmic membrane), and thus conserves the redox energy in a proton gradient. In Granulibacter bethesdensis (strain ATCC BAA-1260 / CGDNIH1), this protein is NADH-quinone oxidoreductase subunit B.